The primary structure comprises 445 residues: Response regulator protein PilR (445 aa).

Positions 5-119 (KALIVDDEPD…RLRELVATAL (115 aa)) constitute a Response regulatory domain. 4-aspartylphosphate is present on residues Asp-11 and Asp-54. Positions 135–364 (LLGESPPMRA…LENMLERAYT (230 aa)) constitute a Sigma-54 factor interaction domain. Residues 163 to 170 (GESGSGKE) and 226 to 235 (ASGGTLFLDE) contribute to the ATP site. Positions 418–437 (RWNRTAAAQRLGLTFRSMRY) form a DNA-binding region, H-T-H motif.

Phosphorylated by PilS.

Its subcellular location is the cytoplasm. Its function is as follows. Member of the two-component regulatory system PilS/PilR that regulates the expression of multiple genes including the type IV pilus (T4P) major subunit PilA. Thereby, plays a major role in the regulation of multiple motility pathways. Upon appropriate environmental signals, the histidine kinase PilS transfers the phosphoryl group onto PilR. In turn, PilR functions as a transcriptional activator by direct binding to a cis-acting sequence upstream of the pilin gene promoter leading to its activation. In Pseudomonas aeruginosa (strain ATCC 15692 / DSM 22644 / CIP 104116 / JCM 14847 / LMG 12228 / 1C / PRS 101 / PAO1), this protein is Response regulator protein PilR (pilR).